A 306-amino-acid polypeptide reads, in one-letter code: tRNA dimethylallyltransferase (306 aa).

9–16 (GPTAIGKT) contacts ATP. Substrate is bound at residue 11-16 (TAIGKT). Residues 34-37 (DSMQ) are interaction with substrate tRNA.

The protein belongs to the IPP transferase family. As to quaternary structure, monomer. It depends on Mg(2+) as a cofactor.

The enzyme catalyses adenosine(37) in tRNA + dimethylallyl diphosphate = N(6)-dimethylallyladenosine(37) in tRNA + diphosphate. Catalyzes the transfer of a dimethylallyl group onto the adenine at position 37 in tRNAs that read codons beginning with uridine, leading to the formation of N6-(dimethylallyl)adenosine (i(6)A). The polypeptide is tRNA dimethylallyltransferase (Lactobacillus helveticus (strain DPC 4571)).